Here is a 427-residue protein sequence, read N- to C-terminus: Serine--tRNA ligase (427 aa).

231 to 233 (TAE) contacts L-serine. 262–264 (RSE) is a binding site for ATP. E285 is a binding site for L-serine. Position 349-352 (349-352 (EISS)) interacts with ATP. Residue S385 participates in L-serine binding.

The protein belongs to the class-II aminoacyl-tRNA synthetase family. Type-1 seryl-tRNA synthetase subfamily. Homodimer. The tRNA molecule binds across the dimer.

It localises to the cytoplasm. It carries out the reaction tRNA(Ser) + L-serine + ATP = L-seryl-tRNA(Ser) + AMP + diphosphate + H(+). The catalysed reaction is tRNA(Sec) + L-serine + ATP = L-seryl-tRNA(Sec) + AMP + diphosphate + H(+). It functions in the pathway aminoacyl-tRNA biosynthesis; selenocysteinyl-tRNA(Sec) biosynthesis; L-seryl-tRNA(Sec) from L-serine and tRNA(Sec): step 1/1. In terms of biological role, catalyzes the attachment of serine to tRNA(Ser). Is also able to aminoacylate tRNA(Sec) with serine, to form the misacylated tRNA L-seryl-tRNA(Sec), which will be further converted into selenocysteinyl-tRNA(Sec). The protein is Serine--tRNA ligase of Sinorhizobium fredii (strain NBRC 101917 / NGR234).